The primary structure comprises 62 residues: E3 SUMO-protein ligase EGR2 (62 aa).

C2H2-type zinc fingers lie at residues 1 to 21 (AEGC…IRIH), 27 to 49 (FQCA…IRTH), and 55 to 62 (FACDYCGR).

Belongs to the EGR C2H2-type zinc-finger protein family. As to quaternary structure, interacts with HCFC1. Interacts with WWP2. Interacts with UBC9. Interacts with CITED1. Interacts (via phosphorylated form) with SFN. Ubiquitinated by WWP2 leading to proteasomal degradation. Post-translationally, acetylated. May be deacetylated by HDAC6, HDAC10 or SIRT1.

Its subcellular location is the nucleus. Its pathway is protein modification; protein sumoylation. In terms of biological role, sequence-specific DNA-binding transcription factor. Plays a role in hindbrain segmentation by regulating the expression of a subset of homeobox containing genes and in Schwann cell myelination by regulating the expression of genes involved in the formation and maintenance of myelin. Binds to two EGR2-consensus sites EGR2A (5'-CTGTAGGAG-3') and EGR2B (5'-ATGTAGGTG-3') in the HOXB3 enhancer and promotes HOXB3 transcriptional activation. Binds to specific DNA sites located in the promoter region of HOXA4, HOXB2 and ERBB2. Regulates hindbrain segmentation by controlling the expression of Hox genes, such as HOXA4, HOXB3 and HOXB2, and thereby specifying odd and even rhombomeres. Promotes the expression of HOXB3 in the rhombomere r5 in the hindbrain. Regulates myelination in the peripheral nervous system after birth, possibly by regulating the expression of myelin proteins, such as MPZ, and by promoting the differentiation of Schwann cells. Involved in the development of the jaw openener musculature, probably by playing a role in its innervation through trigeminal motor neurons. May play a role in adipogenesis, possibly by regulating the expression of CEBPB. E3 SUMO-protein ligase helping SUMO1 conjugation to its coregulators NAB1 and NAB2, whose sumoylation down-regulates EGR2 transcriptional activity. This Cerdocyon thous (Crab-eating fox) protein is E3 SUMO-protein ligase EGR2 (EGR2).